Reading from the N-terminus, the 206-residue chain is Acidic proline-rich protein PRP33 (206 aa).

Residues 1-13 (MLVVLLTAALLVL) form the signal peptide. Positions 15-206 (SAHGSDEEVI…EQPSYLWFSS (192 aa)) are disordered. Residues 55–71 (ENGDGDDSDDGDDDGSG) are compositionally biased toward acidic residues. Repeat copies occupy residues 80–97 (PPPH…HHHG), 98–115 (PPPS…NPQG), 116–133 (PPPQ…NPQG), 134–152 (PPPQ…KPQG), 153–170 (PPPQ…NPQG), and 171–189 (PPPQ…KPQD). A 6 X 18 AA approximate tandem repeats region spans residues 80–189 (PPPHGGNHQR…RPPQPRKPQD (110 aa)). The span at 103-112 (GPQTSSQPGN) shows a compositional bias: low complexity. A compositionally biased stretch (pro residues) spans 113-174 (PQGPPPQGGP…PGNPQGPPPQ (62 aa)).

It localises to the secreted. May protect teeth by binding to tannins. This Rattus norvegicus (Rat) protein is Acidic proline-rich protein PRP33 (Prpg1).